Reading from the N-terminus, the 354-residue chain is Cysteine proteinase A (354 aa).

The N-terminal stretch at 1–24 (MARRNPLLFAIVVTILFVVCYGSA) is a signal peptide. The propeptide at 25 to 125 (LIAQTPPPVD…HKEDVHVDDS (101 aa)) is activation peptide. 3 cysteine pairs are disulfide-bonded: C150–C191, C184–C229, and C282–C330. C153 is a catalytic residue. N-linked (GlcNAc...) asparagine glycosylation is present at N208. Catalysis depends on residues H289 and N309.

Belongs to the peptidase C1 family.

The sequence is that of Cysteine proteinase A (LMCPA) from Leishmania mexicana.